Consider the following 1047-residue polypeptide: tRNA wybutosine-synthesizing protein 4 (1047 aa).

S-adenosyl-L-methionine-binding positions include arginine 69, glycine 95, aspartate 122, 169-170 (DL), and glutamate 196. The JmjC domain maps to 814–1003 (GRQYLRSISA…AAGRDVYGNR (190 aa)).

Belongs to the methyltransferase superfamily. LCMT family.

It catalyses the reaction 7-[(3S)-3-amino-3-carboxypropyl]wyosine(37) in tRNA(Phe) + S-adenosyl-L-methionine = 7-[(3S)-(3-amino-3-methoxycarbonyl)propyl]wyosine(37) in tRNA(Phe) + S-adenosyl-L-homocysteine. It carries out the reaction 7-[(3S)-(3-amino-3-methoxycarbonyl)propyl]wyosine(37) in tRNA(Phe) + S-adenosyl-L-methionine + CO2 = wybutosine(37) in tRNA(Phe) + S-adenosyl-L-homocysteine + 2 H(+). The protein operates within tRNA modification; wybutosine-tRNA(Phe) biosynthesis. Its function is as follows. Probable S-adenosyl-L-methionine-dependent methyltransferase that acts as a component of the wybutosine biosynthesis pathway. Wybutosine is a hyper modified guanosine with a tricyclic base found at the 3'-position adjacent to the anticodon of eukaryotic phenylalanine tRNA. May methylate the carboxyl group of leucine residues to form alpha-leucine ester residues. In Aspergillus fumigatus (strain ATCC MYA-4609 / CBS 101355 / FGSC A1100 / Af293) (Neosartorya fumigata), this protein is tRNA wybutosine-synthesizing protein 4 (ppm2).